The following is a 435-amino-acid chain: Serine--tRNA ligase (435 aa).

242-244 lines the L-serine pocket; the sequence is TAE. 273–275 contributes to the ATP binding site; that stretch reads RSE. Glu296 serves as a coordination point for L-serine. 360–363 serves as a coordination point for ATP; the sequence is EISS. Residue Ser396 coordinates L-serine.

It belongs to the class-II aminoacyl-tRNA synthetase family. Type-1 seryl-tRNA synthetase subfamily. As to quaternary structure, homodimer. The tRNA molecule binds across the dimer.

Its subcellular location is the cytoplasm. The catalysed reaction is tRNA(Ser) + L-serine + ATP = L-seryl-tRNA(Ser) + AMP + diphosphate + H(+). It catalyses the reaction tRNA(Sec) + L-serine + ATP = L-seryl-tRNA(Sec) + AMP + diphosphate + H(+). The protein operates within aminoacyl-tRNA biosynthesis; selenocysteinyl-tRNA(Sec) biosynthesis; L-seryl-tRNA(Sec) from L-serine and tRNA(Sec): step 1/1. Functionally, catalyzes the attachment of serine to tRNA(Ser). Is also able to aminoacylate tRNA(Sec) with serine, to form the misacylated tRNA L-seryl-tRNA(Sec), which will be further converted into selenocysteinyl-tRNA(Sec). The protein is Serine--tRNA ligase of Vibrio atlanticus (strain LGP32) (Vibrio splendidus (strain Mel32)).